Reading from the N-terminus, the 239-residue chain is Ribosomal RNA small subunit methyltransferase G (239 aa).

S-adenosyl-L-methionine is bound by residues Gly-77, Phe-82, 128-129 (AE), and Arg-146. Positions 214–239 (IDKKRQTPKKYPRKPGTPNKTPLLEK) are disordered.

This sequence belongs to the methyltransferase superfamily. RNA methyltransferase RsmG family.

The protein localises to the cytoplasm. Functionally, specifically methylates the N7 position of guanine in position 535 of 16S rRNA. In Staphylococcus aureus (strain Mu3 / ATCC 700698), this protein is Ribosomal RNA small subunit methyltransferase G.